Here is a 593-residue protein sequence, read N- to C-terminus: Pyruvate decarboxylase 1 (593 aa).

The span at 1-19 (METETETPNGSTPCPTSAP) shows a compositional bias: polar residues. Residues 1–20 (METETETPNGSTPCPTSAPS) form a disordered region. Asp55 and His142 together coordinate substrate. A thiamine pyrophosphate binding region spans residues 420–502 (DSWFNCQKLR…FLINNGGYTI (83 aa)). Mg(2+)-binding residues include Asp470, Asn497, and Gly499. Substrate is bound at residue Glu503.

It belongs to the TPP enzyme family. In terms of assembly, homotetramer. It depends on a metal cation as a cofactor. Thiamine diphosphate is required as a cofactor.

It catalyses the reaction a 2-oxocarboxylate + H(+) = an aldehyde + CO2. This chain is Pyruvate decarboxylase 1 (PDC1), found in Pisum sativum (Garden pea).